We begin with the raw amino-acid sequence, 1145 residues long: Protein STU1 (1145 aa).

2 HEAT repeats span residues 96–134 (TLPLVVDKLGDQKDKFRSLASHSLVTLFSVAPADVEKYV) and 168–206 (YVPVLMELLEDADGMVRDAAKNTVIELFRSAPNAAKSDL). 3 disordered regions span residues 226 to 271 (ELIP…GIDT), 510 to 793 (LLNK…VVDP), and 816 to 839 (PEPVIEPTPEPSASMQADQAPAAS). Positions 229-239 (PTSSRPETPAA) are enriched in low complexity. The segment covering 535–545 (SKSTMGTSKPS) has biased composition (polar residues). Low complexity-rich tracts occupy residues 580–594 (TTTTSSASSKSSGAR), 663–676 (ASHASESSLASPSS), and 696–708 (QSQSTMLSMSSPS).

Belongs to the CLASP family. In terms of assembly, interacts with microtubules.

The protein resides in the cytoplasm. Its subcellular location is the cytoskeleton. It is found in the nucleus. It localises to the spindle. Functionally, microtubule binding protein that promotes the stabilization of dynamic microtubules. Required for mitotic spindle formation. The sequence is that of Protein STU1 (STU1) from Gibberella zeae (strain ATCC MYA-4620 / CBS 123657 / FGSC 9075 / NRRL 31084 / PH-1) (Wheat head blight fungus).